Here is a 71-residue protein sequence, read N- to C-terminus: MSKKCEICGKSRTFGNNRSFSLRSSNRSWAPNIRKVRALVDGKPKRINVCTRCLRSGLVERPQFIKTTEEE.

Belongs to the bacterial ribosomal protein bL28 family.

The polypeptide is Large ribosomal subunit protein bL28 (Finegoldia magna (strain ATCC 29328 / DSM 20472 / WAL 2508) (Peptostreptococcus magnus)).